We begin with the raw amino-acid sequence, 373 residues long: L-threonine 3-dehydrogenase, mitochondrial (373 aa).

NAD(+) is bound by residues 62–67 (GGLGQL), 88–90 (DIR), 106–107 (NI), Tyr195, Lys199, and Ile225. The active-site Proton donor/acceptor is Tyr195.

This sequence belongs to the NAD(P)-dependent epimerase/dehydratase family. As to quaternary structure, homodimer.

It is found in the mitochondrion. It carries out the reaction L-threonine + NAD(+) = (2S)-2-amino-3-oxobutanoate + NADH + H(+). It functions in the pathway amino-acid degradation; L-threonine degradation via oxydo-reductase pathway; glycine from L-threonine: step 1/2. Catalyzes the NAD(+)-dependent oxidation of L-threonine to 2-amino-3-ketobutyrate, mediating L-threonine catabolism. The sequence is that of L-threonine 3-dehydrogenase, mitochondrial from Mus musculus (Mouse).